The primary structure comprises 337 residues: Fructose-1,6-bisphosphatase class 1 (337 aa).

Residues Glu94, Asp116, Leu118, and Asp119 each contribute to the Mg(2+) site. Residues 119–122 (DGSS), Asn210, and Lys276 contribute to the substrate site. Glu282 serves as a coordination point for Mg(2+).

Belongs to the FBPase class 1 family. As to quaternary structure, homotetramer. Requires Mg(2+) as cofactor.

It localises to the cytoplasm. It catalyses the reaction beta-D-fructose 1,6-bisphosphate + H2O = beta-D-fructose 6-phosphate + phosphate. It participates in carbohydrate biosynthesis; gluconeogenesis. The protein is Fructose-1,6-bisphosphatase class 1 of Burkholderia orbicola (strain MC0-3).